Consider the following 162-residue polypeptide: Phosphopantetheine adenylyltransferase (162 aa).

Thr-10 lines the substrate pocket. Residues Thr-10–Phe-11 and His-18 each bind ATP. Substrate is bound by residues Lys-42, Leu-74, and Arg-88. ATP is bound by residues Gly-89–Arg-91, Glu-99, and Phe-124–Thr-130.

It belongs to the bacterial CoaD family. As to quaternary structure, homohexamer. Requires Mg(2+) as cofactor.

It is found in the cytoplasm. It carries out the reaction (R)-4'-phosphopantetheine + ATP + H(+) = 3'-dephospho-CoA + diphosphate. The protein operates within cofactor biosynthesis; coenzyme A biosynthesis; CoA from (R)-pantothenate: step 4/5. Functionally, reversibly transfers an adenylyl group from ATP to 4'-phosphopantetheine, yielding dephospho-CoA (dPCoA) and pyrophosphate. The sequence is that of Phosphopantetheine adenylyltransferase from Francisella tularensis subsp. mediasiatica (strain FSC147).